Here is a 69-residue protein sequence, read N- to C-terminus: Large ribosomal subunit protein bL28 (69 aa).

This sequence belongs to the bacterial ribosomal protein bL28 family.

The chain is Large ribosomal subunit protein bL28 from Nitratidesulfovibrio vulgaris (strain ATCC 29579 / DSM 644 / CCUG 34227 / NCIMB 8303 / VKM B-1760 / Hildenborough) (Desulfovibrio vulgaris).